Reading from the N-terminus, the 103-residue chain is Signal recognition particle 19 kDa protein (103 aa).

This sequence belongs to the SRP19 family. Part of the signal recognition particle protein translocation system, which is composed of SRP and FtsY. Archaeal SRP consists of a 7S RNA molecule of 300 nucleotides and two protein subunits: SRP54 and SRP19.

The protein resides in the cytoplasm. In terms of biological role, involved in targeting and insertion of nascent membrane proteins into the cytoplasmic membrane. Binds directly to 7S RNA and mediates binding of the 54 kDa subunit of the SRP. This chain is Signal recognition particle 19 kDa protein, found in Hyperthermus butylicus (strain DSM 5456 / JCM 9403 / PLM1-5).